The following is a 447-amino-acid chain: Polyamine export protein (447 aa).

Topologically, residues 1–4 (MLNS) are cytoplasmic. In terms of domain architecture, CNNM transmembrane spans 1 to 197 (MLNSIFIIFC…ALAGVLRKQE (197 aa)). Residues 5 to 25 (IFIIFCLIAVSAFFSISEISL) form a helical membrane-spanning segment. At 26-54 (AASRKIKLKLLADEGSINAQRVLKMQENP) the chain is on the periplasmic side. The chain crosses the membrane as a helical span at residues 55-75 (GMFFTVVQIGLNAVAILGGIV). At 76–99 (GDAAFSPAFSALFSHYMSPELSEQ) the chain is on the cytoplasmic side. A helical transmembrane segment spans residues 100–120 (LSFILSFSLVTGLFILFADLT). The Periplasmic segment spans residues 121 to 141 (PKRIGMIAPEAVALRIINPMR). Residues 142–162 (FCLFVFRPLVWLFNGMANNIF) form a helical membrane-spanning segment. Residues 163 to 447 (RLFKIPMVRK…DAQGKEDSAA (285 aa)) lie on the Cytoplasmic side of the membrane. CBS domains lie at 216–275 (MTSR…NQSM) and 282–343 (QIRN…GLEE).

It belongs to the UPF0053 family. PaeA subfamily.

It localises to the cell inner membrane. Involved in cadaverine and putrescine tolerance in stationary phase. May facilitate the efflux of both cadaverine and putrescine from the cytoplasm, reducing potentially toxic levels under certain stress conditions. The chain is Polyamine export protein from Salmonella typhimurium (strain 14028s / SGSC 2262).